A 120-amino-acid polypeptide reads, in one-letter code: Secreted effector PIT2 (120 aa).

A signal peptide spans 1–25 (MLFRSAFVLLIVAFASACLVQHVQA). The tract at residues 46-59 (KLNRRWWFGFTGSL) is PID14 protease inhibitor domain.

In terms of assembly, interacts with host cysteine proteases CP1A, CP1B, XCP2 and CP2. Cleaved by host target papain-like cysteine proteases (PLCPs) to release the embedded inhibitor peptide PID14.

Its subcellular location is the secreted. Its function is as follows. Secreted effector required for virulence. Functions as an inhibitor of a set of apoplastic maize papain-like cysteine proteases (PLCPs) including CP1A, CP1B, XCP2 and CP2, whose activity is directly linked with salicylic-acid-associated plant defenses. Acts as a substrate mimicking molecule for apoplastic PLCPs and its processing releases the embedded inhibitor peptide PID14, which in turn blocks PLCPs to modulate host immunity. This Mycosarcoma maydis (Corn smut fungus) protein is Secreted effector PIT2.